Consider the following 147-residue polypeptide: Hemoglobin subunit beta (147 aa).

Position 2 is an N-acetylvaline (V2). Positions 3 to 147 constitute a Globin domain; that stretch reads HLTGEEKAAV…VANALAHKYH (145 aa). T13 is modified (phosphothreonine). S45 carries the post-translational modification Phosphoserine. K60 bears the N6-acetyllysine mark. H64 contacts heme b. An N6-acetyllysine modification is found at K83. H93 contacts heme b. S-nitrosocysteine is present on C94. N6-acetyllysine is present on K145.

It belongs to the globin family. Heterotetramer of two alpha chains and two beta chains. As to expression, red blood cells.

Its function is as follows. Involved in oxygen transport from the lung to the various peripheral tissues. The protein is Hemoglobin subunit beta (HBB) of Lagothrix lagotricha (Brown woolly monkey).